A 124-amino-acid chain; its full sequence is Membrane-anchored ubiquitin-fold protein 2 (124 aa).

One can recognise a Ubiquitin-like domain in the interval 8-74; sequence LEIKFRLNDG…LENNKTVGDC (67 aa). 4 S-palmitoyl cysteine lipidation sites follow: cysteine 115, cysteine 117, cysteine 119, and cysteine 124.

In terms of processing, acylated protein. Probably modified with palmitate. Ubiquitous, but three fold higher expression in stamens.

It localises to the cell membrane. Its function is as follows. May serve as docking site to facilitate the association of other proteins to the plasma membrane. The protein is Membrane-anchored ubiquitin-fold protein 2 (MUB2) of Arabidopsis thaliana (Mouse-ear cress).